Consider the following 269-residue polypeptide: Histone doublet H2B-H2A (269 aa).

Residues 1–168 (MATQKETTRK…LAGNAARDSK (168 aa)) form a histone fold region. The tract at residues 210–249 (RKKARKTTEKEASSPKKKAAPKKKKAASKQKKSLSDKELA) is disordered. Over residues 224 to 241 (PKKKAAPKKKKAASKQKK) the composition is skewed to basic residues.

It localises to the host nucleus. Its subcellular location is the host cytoplasm. It is found in the virion. In terms of biological role, histone-like protein that is recruited to viral factories during viral replication and participates in viral DNA packaging and virion production probably by forming unstable nucleosome-like particles. May compact the viral DNA. This is Histone doublet H2B-H2A from Melbournevirus (MelV).